The following is a 214-amino-acid chain: MTAIRAPRRRASSDVQGGFDFSRPDEIVCGVDEAGRGPLAGPVVAAAVILDPAQPIDGLDDSKVLSAKKRDALYDLIVTRSHAYCVASASVDEIDTLNILHATMLAMKRAVEGLSVLPTLAQIDGNRCPTLSVRAEAIVSGDALVPSISAASILAKVTRDRMLVDLHERFPVYGFNVHAGYGTAKHLAALREHGPCEAHRRSFAPVRAALDLIR.

An RNase H type-2 domain is found at 26-214; it reads EIVCGVDEAG…PVRAALDLIR (189 aa). A divalent metal cation is bound by residues D32, E33, and D124.

It belongs to the RNase HII family. Requires Mn(2+) as cofactor. The cofactor is Mg(2+).

The protein resides in the cytoplasm. It catalyses the reaction Endonucleolytic cleavage to 5'-phosphomonoester.. In terms of biological role, endonuclease that specifically degrades the RNA of RNA-DNA hybrids. This chain is Ribonuclease HII, found in Burkholderia cenocepacia (strain HI2424).